The primary structure comprises 444 residues: MLKYLFMIIFLIPICLLGNCWWLVHSLIFLLSFIFMISLYSYSDLSMISYYFGVDFYSFMLILLSLWICCLMITASSSIYSSSYHPNFFVFVVLLLLIMLFCSFSSLNLFSFYIFFESSLVPTLFLILGWGYQPERLQAGVYLMFYTLVASLPLLLVLFSINDLFNTLYYPLLIDFGSFYFLFYVFSIFAFLVKMPIFLFHLWLPKAHVEAPISGSMILAGILLKLGGYGIFRMMKVISCLGLSFNYFVLSLSLFGGVIISFVCFRQVDLKSLIAYSSVAHMSLVICGLMTMNWWGCMGSLSLMIGHGISSSGLFCLSNIIYELLGSRSLLINKGMINLMPSMTIWWFLLSSSNMASPPSLNLLGEFSLLNSIISWSSYMILLLIFLSFFSAVYTLYMYSYSQHGLYYSGVYTCSLGYFREYHLLFLHWFPLNLLCLKGEYFYF.

A run of 13 helical transmembrane segments spans residues 4–24, 28–48, 53–73, 87–107, 109–129, 141–161, 173–193, 212–232, 245–265, 272–294, 306–326, 330–350, and 373–393; these read YLFM…WWLV, IFLL…LSMI, GVDF…CLMI, NFFV…FSSL, LFSF…LILG, VYLM…LFSI, LIDF…AFLV, PISG…YGIF, FNYF…FVCF, SLIA…TMNW, GHGI…ELLG, LLIN…WFLL, and IISW…FSAV.

It belongs to the complex I subunit 4 family.

It localises to the mitochondrion membrane. The catalysed reaction is a ubiquinone + NADH + 5 H(+)(in) = a ubiquinol + NAD(+) + 4 H(+)(out). In terms of biological role, core subunit of the mitochondrial membrane respiratory chain NADH dehydrogenase (Complex I) that is believed to belong to the minimal assembly required for catalysis. Complex I functions in the transfer of electrons from NADH to the respiratory chain. The immediate electron acceptor for the enzyme is believed to be ubiquinone. The polypeptide is NADH-ubiquinone oxidoreductase chain 4 (ND4) (Locusta migratoria (Migratory locust)).